Reading from the N-terminus, the 414-residue chain is Tyrosine--tRNA ligase (414 aa).

Tyr38 contacts L-tyrosine. Positions Pro43–Asn52 match the 'HIGH' region motif. L-tyrosine is bound by residues Tyr165 and Gln169. Positions Lys227 to Ser231 match the 'KMSKS' region motif. Lys230 is an ATP binding site. The 65-residue stretch at Asp349 to Tyr413 folds into the S4 RNA-binding domain.

It belongs to the class-I aminoacyl-tRNA synthetase family. TyrS type 1 subfamily. In terms of assembly, homodimer.

Its subcellular location is the cytoplasm. It catalyses the reaction tRNA(Tyr) + L-tyrosine + ATP = L-tyrosyl-tRNA(Tyr) + AMP + diphosphate + H(+). Catalyzes the attachment of tyrosine to tRNA(Tyr) in a two-step reaction: tyrosine is first activated by ATP to form Tyr-AMP and then transferred to the acceptor end of tRNA(Tyr). In Mycoplasmopsis pulmonis (strain UAB CTIP) (Mycoplasma pulmonis), this protein is Tyrosine--tRNA ligase.